The sequence spans 153 residues: Deoxyuridine 5'-triphosphate nucleotidohydrolase (153 aa).

Residues 71–73 (RSG), Asn-84, 88–90 (TID), and Lys-98 each bind substrate.

It belongs to the dUTPase family. It depends on Mg(2+) as a cofactor.

The enzyme catalyses dUTP + H2O = dUMP + diphosphate + H(+). Its pathway is pyrimidine metabolism; dUMP biosynthesis; dUMP from dCTP (dUTP route): step 2/2. Its function is as follows. This enzyme is involved in nucleotide metabolism: it produces dUMP, the immediate precursor of thymidine nucleotides and it decreases the intracellular concentration of dUTP so that uracil cannot be incorporated into DNA. In Wolbachia sp. subsp. Drosophila simulans (strain wRi), this protein is Deoxyuridine 5'-triphosphate nucleotidohydrolase.